Here is a 198-residue protein sequence, read N- to C-terminus: Nucleoid occlusion factor SlmA (198 aa).

An HTH tetR-type domain is found at 10 to 70 (NRREEILQSL…SLIEFIEDSL (61 aa)). A DNA-binding region (H-T-H motif) is located at residues 33 to 52 (TTAKLAASVGVSEAALYRHF). A coiled-coil region spans residues 117–144 (EQDRLQGRINQLFERIEAQLRQVLREKR).

It belongs to the nucleoid occlusion factor SlmA family. As to quaternary structure, homodimer. Interacts with FtsZ.

It localises to the cytoplasm. It is found in the nucleoid. Required for nucleoid occlusion (NO) phenomenon, which prevents Z-ring formation and cell division over the nucleoid. Acts as a DNA-associated cell division inhibitor that binds simultaneously chromosomal DNA and FtsZ, and disrupts the assembly of FtsZ polymers. SlmA-DNA-binding sequences (SBS) are dispersed on non-Ter regions of the chromosome, preventing FtsZ polymerization at these regions. The sequence is that of Nucleoid occlusion factor SlmA from Salmonella typhi.